The sequence spans 179 residues: UPF0227 protein Shewmr4_1727 (179 aa).

This sequence belongs to the UPF0227 family.

This chain is UPF0227 protein Shewmr4_1727, found in Shewanella sp. (strain MR-4).